Consider the following 183-residue polypeptide: Large ribosomal subunit protein uL6 (183 aa).

The protein belongs to the universal ribosomal protein uL6 family. As to quaternary structure, part of the 50S ribosomal subunit.

Its function is as follows. This protein binds to the 23S rRNA, and is important in its secondary structure. It is located near the subunit interface in the base of the L7/L12 stalk, and near the tRNA binding site of the peptidyltransferase center. The sequence is that of Large ribosomal subunit protein uL6 from Moorella thermoacetica (strain ATCC 39073 / JCM 9320).